The sequence spans 1191 residues: Solute carrier family 12 member 2 (1191 aa).

The tract at residues 1-166 (MEPAFPASSA…MSEGSLHSSG (166 aa)) is disordered. Residues 1 to 258 (MEPAFPASSA…ADNKGVVKFG (258 aa)) are Cytoplasmic-facing. 4 stretches are compositionally biased toward low complexity: residues 13-25 (QSQS…AGQQ), 59-69 (KGQTAAQPAAA), 80-99 (AAAP…AAAA), and 131-141 (SASSAHGGHQP). The span at 142–155 (PSESMNGYPQNGDT) shows a compositional bias: polar residues. Phosphothreonine; by OXSR1 and STK39 is present on residues Thr-175, Thr-179, and Thr-184. Phosphothreonine occurs at positions 189 and 202. A discontinuously helical membrane pass occupies residues 259–288 (WIKGVLVRCMLNIWGVMLFIRLSWIVGHAG). Residue Leu-269 coordinates Na(+). Residues Asn-270 and Ile-271 each contribute to the K(+) site. Trp-272 contributes to the Na(+) binding site. Chloride contacts are provided by Gly-273, Val-274, and Met-275. The helical transmembrane segment at 289-308 (IGLALLVIGTATVVTTITGL) threads the bilayer. The Cytoplasmic segment spans residues 309–339 (STSAITTNGFVRGGGAYYLISRSLGPEFGGA). A helical membrane pass occupies residues 340–367 (IGLIFAFANAVAVAMYVVGFAETVRDLL). Residue Phe-344 participates in chloride binding. Position 355 (Tyr-355) interacts with K(+). The Extracellular portion of the chain corresponds to 368–377 (VEHNALMIDE). The helical transmembrane segment at 378–401 (MSDIRIIGSVTIVVLFGISVAGME) threads the bilayer. Residues 402–404 (WEA) are Cytoplasmic-facing. Residues 405–426 (KAQIVLLGILLLAIVNFTVGTF) traverse the membrane as a helical segment. Topologically, residues 427-458 (IPANDKRAKGFFNYRGEIFSENFVPDFRDGED) are extracellular. Residues 459–476 (FFSVFAIFFPAATGILAG) traverse the membrane as a discontinuously helical segment. Residues Pro-468, Ala-469, and Thr-471 each coordinate K(+). Chloride-binding residues include Pro-468 and Ala-469. Residues Gly-472 and Ile-473 each coordinate chloride. The Cytoplasmic segment spans residues 477–491 (ANISGDLADPQLAIP). The chain crosses the membrane as a helical span at residues 492-513 (KGTLLAILITTIVYAGAAVSVG). The Extracellular segment spans residues 514-571 (SCIVREATGNLTDAIIPGTVTNCTNVACKLGFNFSSCATNKCSYGLMNDFQVMSLVSG). N-linked (GlcNAc...) asparagine glycans are attached at residues Asn-523 and Asn-535. The cysteines at positions 536 and 541 are disulfide-linked. Asn-546 carries an N-linked (GlcNAc...) asparagine glycan. Cys-550 and Cys-555 are disulfide-bonded. Residues 572 to 596 (FGPLITAGIFSATLSSALASLVSAP) form a helical membrane-spanning segment. The Na(+) site is built by Ala-583, Ser-586, and Ser-587. At 597-624 (KIFQALCKDNIYPGLHVFSVGYGKNNEP) the chain is on the cytoplasmic side. A run of 2 helical transmembrane segments spans residues 625-645 (LRGY…AELN) and 646-664 (VIAP…LINF). Chloride is bound by residues Phe-655 and Tyr-659. Residues 665–687 (SVFHASLAKSPGWRPAFRFYNMW) are Cytoplasmic-facing. A run of 2 helical transmembrane segments spans residues 688–705 (ISLI…VINW) and 706–718 (WAAL…VLAL). Residues 719 to 1191 (YIYVTYKKPD…NHQSVLTFYS (473 aa)) lie on the Cytoplasmic side of the membrane. Residues 734 to 751 (STQALTYLNALQHAIRLT) form a scissor helix region. The tract at residues 929-972 (HSDADSSKPSSKSVSETNSPAVCQDQKDEEDDGKASTQPLLKKE) is disordered. The segment covering 935 to 948 (SKPSSKSVSETNSP) has biased composition (low complexity). At Thr-1114 the chain carries Phosphothreonine.

Belongs to the SLC12A transporter family. As to quaternary structure, homodimer. Phosphorylated at Thr-175, Thr-179 and Thr-184 by OXSR1/OSR1 and STK39/SPAK downstream of WNK kinases (WNK1, WNK2, WNK3 or WNK4), promoting its activity. In terms of tissue distribution, strongly expressed in rectal gland, brain, gill and intestine. Also detected at lower levels in heart, kidney, and testis.

It localises to the basolateral cell membrane. The enzyme catalyses K(+)(out) + 2 chloride(out) + Na(+)(out) = K(+)(in) + 2 chloride(in) + Na(+)(in). With respect to regulation, activated following phosphorylation by OXSR1/OSR1 and STK39/SPAK. Inhibited by bumetanide. Functionally, cation-chloride cotransporter which mediates the electroneutral transport of chloride, potassium and/or sodium ions across the membrane. Plays a vital role in the regulation of ionic balance and cell volume. The chain is Solute carrier family 12 member 2 (SLC12A2) from Squalus acanthias (Spiny dogfish).